The following is a 151-amino-acid chain: 3-hydroxyacyl-[acyl-carrier-protein] dehydratase FabZ (151 aa).

The active site involves His56.

It belongs to the thioester dehydratase family. FabZ subfamily.

It localises to the cytoplasm. The enzyme catalyses a (3R)-hydroxyacyl-[ACP] = a (2E)-enoyl-[ACP] + H2O. Functionally, involved in unsaturated fatty acids biosynthesis. Catalyzes the dehydration of short chain beta-hydroxyacyl-ACPs and long chain saturated and unsaturated beta-hydroxyacyl-ACPs. This Rhodopseudomonas palustris (strain HaA2) protein is 3-hydroxyacyl-[acyl-carrier-protein] dehydratase FabZ.